Consider the following 486-residue polypeptide: Zinc metalloproteinase-disintegrin VMP-II (486 aa).

Residues 1–20 (MIQVLLVTICLAVFPYQGSS) form the signal peptide. A propeptide spanning residues 21–190 (IILESGNVND…KASQSNLPPE (170 aa)) is cleaved from the precursor. Residue Q191 is modified to Pyrrolidone carboxylic acid. The region spanning 197–394 (RYIELVVVAD…HYTTCLYNEP (198 aa)) is the Peptidase M12B domain. Residues E200 and D284 each contribute to the Ca(2+) site. 3 disulfide bridges follow: C308–C389, C348–C372, and C350–C355. Zn(2+) is bound at residue H333. E334 is a catalytic residue. H337 and H343 together coordinate Zn(2+). Residues C389 and N392 each contribute to the Ca(2+) site. In terms of domain architecture, Disintegrin spans 402–486 (PPVCGNYYTE…AECPNKGYYG (85 aa)). Intrachain disulfides connect C405/C424, C416/C434, C418/C429, C428/C451, C442/C448, C447/C472, and C460/C479. The Cell attachment site motif lies at 464-466 (RGD).

It belongs to the venom metalloproteinase (M12B) family. P-II subfamily. P-IIb sub-subfamily. Monomer. Requires Zn(2+) as cofactor. As to expression, expressed by the venom gland.

The protein resides in the secreted. In terms of biological role, snake venom zinc metalloproteinase that inhibits ADP-induced platelet aggregation (probably by binding integrin alpha-IIb/beta-3 (ITGA2B/ITGB3)) and degrades fibrinogen. The chain is Zinc metalloproteinase-disintegrin VMP-II from Crotalus atrox (Western diamondback rattlesnake).